The following is a 747-amino-acid chain: Cyclic di-GMP phosphodiesterase PdeF (747 aa).

At 1-14 (MKLNATYIKIRDKW) the chain is on the periplasmic side. Residues 15-36 (WGLPLFLPSLILPIFAHINTFA) traverse the membrane as a helical segment. The Cytoplasmic segment spans residues 37–42 (HISSGE). The chain crosses the membrane as a helical span at residues 43-65 (VFLFYLPLALMISMMMFFSWAAL). Residues 66–79 (PGIALGIFVRKYAE) are Periplasmic-facing. Residues 80-102 (LGFYETLSLTANFIIIIILCWGG) form a helical membrane-spanning segment. Topologically, residues 103–128 (YRVFTPRRNNVSHGDTRLISQRIFWQ) are cytoplasmic. The helical transmembrane segment at 129-151 (IVFPATLFLILFQFAAFVGLLAS) threads the bilayer. The Periplasmic portion of the chain corresponds to 152–165 (RENLVGVMPFNLGT). A helical membrane pass occupies residues 166–188 (LINYQALLVGNLIGVPLCYFIIR). Residues 189–215 (VVRNPFYLRSYYSQLKQQVDAKVTKKE) lie on the Cytoplasmic side of the membrane. A helical membrane pass occupies residues 216-235 (FALWLLALGALLLLLCMPLN). Residues 236 to 239 (EKST) are Periplasmic-facing. Residues 240–259 (IFSTNYTLSLLLPLMMWGAM) form a helical membrane-spanning segment. Residues 260 to 265 (RYGYKL) lie on the Cytoplasmic side of the membrane. The chain crosses the membrane as a helical span at residues 266-285 (ISLLWAVVLMISIHSYQNYI). Topologically, residues 286–294 (PIYPGYTTQ) are periplasmic. A helical membrane pass occupies residues 295–317 (LTITSSSYLVFSFIVNYMAVLAT). The Cytoplasmic segment spans residues 318-747 (RQRAVVRRIQ…NEIEPIRESA (430 aa)). Residues 493–744 (KVAMMNRLQQ…DTLNEIEPIR (252 aa)) enclose the EAL domain.

It depends on Mg(2+) as a cofactor. Requires Mn(2+) as cofactor.

Its subcellular location is the cell inner membrane. It carries out the reaction 3',3'-c-di-GMP + H2O = 5'-phosphoguanylyl(3'-&gt;5')guanosine + H(+). Inhibited by pGpG. Phosphodiesterase (PDE) that catalyzes the hydrolysis of cyclic-di-GMP (c-di-GMP) to 5'-pGpG. Truncated proteins consisting of the GGDEF/EAL domains (residues 319-747) or of the EAL domain alone (481-747) have c-di-GMP phosphodiesterase activity. They do not have diguanylate cyclase activity. Cyclic-di-GMP is a second messenger which controls cell surface-associated traits in bacteria. The chain is Cyclic di-GMP phosphodiesterase PdeF from Escherichia coli (strain K12).